A 169-amino-acid polypeptide reads, in one-letter code: Calcium-binding protein G (169 aa).

EF-hand domains lie at 9–44 (KIFQDIQNFIQDYDLNKDYSVTSSEIYQSFLKKMNG), 60–83 (VDMDNDGKFSYYEISKYCADQAKK), 92–127 (AALADVEALLLRLDKDKDKKLNKTEFVKFFKEQGYN), and 133–162 (DYVLKIIDLDKDGYVSASELQEWFKQKRLA). The Ca(2+) site is built by aspartate 105, aspartate 107, aspartate 109, lysine 111, glutamate 116, aspartate 140, aspartate 142, aspartate 144, tyrosine 146, and glutamate 151.

The sequence is that of Calcium-binding protein G (cbpG) from Dictyostelium discoideum (Social amoeba).